We begin with the raw amino-acid sequence, 367 residues long: Tubulin-like protein CetZ (367 aa).

GTP-binding positions include 11–15, Ser111, 115–117, Glu148, Asn176, and Asn194; these read QCGNR and GTG.

This sequence belongs to the CetZ family.

It is found in the cytoplasm. Involved in cell shape control. The chain is Tubulin-like protein CetZ from Methanothrix thermoacetophila (strain DSM 6194 / JCM 14653 / NBRC 101360 / PT) (Methanosaeta thermophila).